A 277-amino-acid chain; its full sequence is Formamidopyrimidine-DNA glycosylase (277 aa).

Pro-2 functions as the Schiff-base intermediate with DNA in the catalytic mechanism. Catalysis depends on Glu-3, which acts as the Proton donor. Residue Lys-60 is the Proton donor; for beta-elimination activity of the active site. Residues His-94, Arg-113, and Arg-156 each contribute to the DNA site. The FPG-type zinc-finger motif lies at Lys-241 to Lys-275. The active-site Proton donor; for delta-elimination activity is the Arg-265.

This sequence belongs to the FPG family. Monomer. Zn(2+) is required as a cofactor.

The enzyme catalyses Hydrolysis of DNA containing ring-opened 7-methylguanine residues, releasing 2,6-diamino-4-hydroxy-5-(N-methyl)formamidopyrimidine.. The catalysed reaction is 2'-deoxyribonucleotide-(2'-deoxyribose 5'-phosphate)-2'-deoxyribonucleotide-DNA = a 3'-end 2'-deoxyribonucleotide-(2,3-dehydro-2,3-deoxyribose 5'-phosphate)-DNA + a 5'-end 5'-phospho-2'-deoxyribonucleoside-DNA + H(+). Its function is as follows. Involved in base excision repair of DNA damaged by oxidation or by mutagenic agents. Acts as a DNA glycosylase that recognizes and removes damaged bases. Has a preference for oxidized purines, such as 7,8-dihydro-8-oxoguanine (8-oxoG). Has AP (apurinic/apyrimidinic) lyase activity and introduces nicks in the DNA strand. Cleaves the DNA backbone by beta-delta elimination to generate a single-strand break at the site of the removed base with both 3'- and 5'-phosphates. The protein is Formamidopyrimidine-DNA glycosylase of Desulforamulus reducens (strain ATCC BAA-1160 / DSM 100696 / MI-1) (Desulfotomaculum reducens).